The following is a 161-amino-acid chain: Cytochrome b6-f complex subunit 4 (161 aa).

3 helical membrane-spanning segments follow: residues 37-57 (LLYI…GLAV), 96-116 (LLGV…PFIE), and 130-150 (AMTV…GAAF).

This sequence belongs to the cytochrome b family. PetD subfamily. The 4 large subunits of the cytochrome b6-f complex are cytochrome b6, subunit IV (17 kDa polypeptide, PetD), cytochrome f and the Rieske protein, while the 4 small subunits are PetG, PetL, PetM and PetN. The complex functions as a dimer.

Its subcellular location is the cellular thylakoid membrane. Its function is as follows. Component of the cytochrome b6-f complex, which mediates electron transfer between photosystem II (PSII) and photosystem I (PSI), cyclic electron flow around PSI, and state transitions. The chain is Cytochrome b6-f complex subunit 4 from Synechococcus elongatus.